The sequence spans 392 residues: MAQREWVEKDFYKELGVSSDASPEEIKRAYRKLARDLHPDANPDNPAAGERFKAVSEAHNVLSDPAKRKEYDETRRLFAGGGFGGRRFDTGGFGGFNVGGDGAEFNLNDLFDAAGRSGGTNIGDLFGGLFGRASGGRPSRPRRGNDLETETQLDFVEAAKGVAMPLRLTSPAPCTNCHGSGARPGTSPKVCPTCNGSGVISRNQGAFGFSEPCTDCRGSGSIIEHPCDECKGTGVTTRTRTINVRIPPGVEDGQRIRLPGQGEAGLRGAPSGDLYVTVHVRPHKVFGRDGDDLTVTVPVSFTELALGSTISVPTLDGKVGVRVPKGTADGRILRVRGRGVPKRSGGHGDLLVTVKVAVPPNLDGAAQEALEAYAAAERASGFDPRAGWAGNR.

The region spanning 10 to 75 (DFYKELGVSS…AKRKEYDETR (66 aa)) is the J domain. The CR-type zinc finger occupies 161-239 (GVAMPLRLTS…CKGTGVTTRT (79 aa)). Zn(2+) is bound by residues cysteine 174, cysteine 177, cysteine 191, cysteine 194, cysteine 213, cysteine 216, cysteine 227, and cysteine 230. CXXCXGXG motif repeat units lie at residues 174 to 181 (CTNCHGSG), 191 to 198 (CPTCNGSG), 213 to 220 (CTDCRGSG), and 227 to 234 (CDECKGTG).

It belongs to the DnaJ family. In terms of assembly, homodimer. It depends on Zn(2+) as a cofactor.

It is found in the cytoplasm. Functionally, participates actively in the response to hyperosmotic and heat shock by preventing the aggregation of stress-denatured proteins and by disaggregating proteins, also in an autonomous, DnaK-independent fashion. Unfolded proteins bind initially to DnaJ; upon interaction with the DnaJ-bound protein, DnaK hydrolyzes its bound ATP, resulting in the formation of a stable complex. GrpE releases ADP from DnaK; ATP binding to DnaK triggers the release of the substrate protein, thus completing the reaction cycle. Several rounds of ATP-dependent interactions between DnaJ, DnaK and GrpE are required for fully efficient folding. Also involved, together with DnaK and GrpE, in the DNA replication of plasmids through activation of initiation proteins. This Mycolicibacterium paratuberculosis (strain ATCC BAA-968 / K-10) (Mycobacterium paratuberculosis) protein is Chaperone protein DnaJ 2.